A 327-amino-acid polypeptide reads, in one-letter code: Elongation factor P--(R)-beta-lysine ligase (327 aa).

Residue 80–82 participates in substrate binding; the sequence is SPE. ATP-binding positions include 104–106 and N113; that span reads RNE. Y122 is a substrate binding site. 246–247 contributes to the ATP binding site; sequence EL. E253 lines the substrate pocket. ATP is bound at residue G302.

Belongs to the class-II aminoacyl-tRNA synthetase family. EpmA subfamily. As to quaternary structure, homodimer.

It catalyses the reaction D-beta-lysine + L-lysyl-[protein] + ATP = N(6)-((3R)-3,6-diaminohexanoyl)-L-lysyl-[protein] + AMP + diphosphate + H(+). Functionally, with EpmB is involved in the beta-lysylation step of the post-translational modification of translation elongation factor P (EF-P). Catalyzes the ATP-dependent activation of (R)-beta-lysine produced by EpmB, forming a lysyl-adenylate, from which the beta-lysyl moiety is then transferred to the epsilon-amino group of a conserved specific lysine residue in EF-P. This chain is Elongation factor P--(R)-beta-lysine ligase, found in Haemophilus ducreyi (strain 35000HP / ATCC 700724).